The primary structure comprises 458 residues: GTPase Der (458 aa).

EngA-type G domains are found at residues 9–171 (KTIA…DLNQ) and 197–368 (IQVG…ECFS). GTP-binding positions include 15–22 (GQPNVGKS), 62–66 (DTGGM), 123–126 (NKID), 203–210 (GRVNVGKS), 250–254 (DTAGI), and 314–317 (NKWD). One can recognise a KH-like domain in the interval 369 to 453 (KRIPTSLLNS…PLILNAKDKK (85 aa)).

This sequence belongs to the TRAFAC class TrmE-Era-EngA-EngB-Septin-like GTPase superfamily. EngA (Der) GTPase family. In terms of assembly, associates with the 50S ribosomal subunit.

Its function is as follows. GTPase that plays an essential role in the late steps of ribosome biogenesis. The sequence is that of GTPase Der from Helicobacter pylori (strain ATCC 700392 / 26695) (Campylobacter pylori).